A 256-amino-acid polypeptide reads, in one-letter code: UPF0246 protein Maqu_2499 (256 aa).

It belongs to the UPF0246 family.

The protein is UPF0246 protein Maqu_2499 of Marinobacter nauticus (strain ATCC 700491 / DSM 11845 / VT8) (Marinobacter aquaeolei).